Here is a 1048-residue protein sequence, read N- to C-terminus: Integrin alpha-V (1048 aa).

The signal sequence occupies residues 1 to 30 (MAFPPRRRLRLGPRGLPLLLSGLLLPLCRA). Residues 31–992 (FNLDVESPAE…WGIQPAPMPV (962 aa)) are Extracellular-facing. 7 FG-GAP repeats span residues 32–98 (NLDV…RRCQ), 109–170 (DYAK…VEYA), 173–225 (RSKN…VSKY), 237–291 (QLAT…GKNM), 292–357 (SSLH…GDFQ), 358–415 (TIKL…GLNA), and 419–482 (QILE…VYPS). A glycan (N-linked (GlcNAc...) asparagine) is linked at N74. Intrachain disulfides connect C89-C97, C138-C158, and C172-C185. Residues D260, N262, D264, I266, and D268 each contribute to the Ca(2+) site. Residues N290 and N296 are each glycosylated (N-linked (GlcNAc...) asparagine). D314, N316, D318, Y320, D322, D379, D381, D383, F385, D387, D443, D445, N447, Y449, and D451 together coordinate Ca(2+). An N-linked (GlcNAc...) asparagine glycan is attached at N488. Intrachain disulfides connect C491/C502 and C508/C565. Residues N554 and N615 are each glycosylated (N-linked (GlcNAc...) asparagine). 2 disulfide bridges follow: C626–C632 and C698–C711. N704, N835, N851, and N874 each carry an N-linked (GlcNAc...) asparagine glycan. 2 cysteine pairs are disulfide-bonded: C852–C914 and C904–C909. N-linked (GlcNAc...) asparagine glycosylation is found at N945, N973, and N980. The chain crosses the membrane as a helical span at residues 993–1016 (PVWVIILAVLAGLLLLAVLVFVMY). The Cytoplasmic segment spans residues 1017 to 1048 (RMGFFKRVRPPQEEQEREQLQPHENGEGNSET). The GFFKR motif signature appears at 1019–1023 (GFFKR). Residues 1027 to 1042 (PQEEQEREQLQPHENG) show a composition bias toward basic and acidic residues. The disordered stretch occupies residues 1027 to 1048 (PQEEQEREQLQPHENGEGNSET).

Belongs to the integrin alpha chain family. Heterodimer of an alpha and a beta subunit. The alpha subunit is composed of a heavy and a light chain linked by a disulfide bond. Alpha-V (ITGAV) associates with either beta-1 (ITGB1), beta-3 (ITGB3), beta-5 (ITGB5), beta-6 (ITGB6) or beta-8 (ITGB8). Interacts with RAB25. Interacts with CIB1. Integrins ITGAV:ITGB3 and ITGAV:ITGB5 interact with FBLN5 (via N-terminus). ITGAV:ITGB3 and ITGAV:ITGB5 interact with CCN3. ITGAV:ITGB3 interacts with ADGRA2. ITGAV:ITGB3 interacts with FGF2; it is likely that FGF2 can simultaneously bind ITGAV:ITGB3 and FGF receptors. ITGAV:ITGB3 interacts with SELP (via C-type lectin domain); the interaction mediates cell-cell interaction and adhesion. ITGAV:ITGB3 is found in a ternary complex with CX3CR1 and CX3CL1. ITGAV:ITGB3 is found in a ternary complex with NRG1 and ERBB3. ITGAV:ITGB3 is found in a ternary complex with FGF1 and FGFR1. ITGAV:ITGB3 is found in a ternary complex with IGF1 and IGF1R. ITGAV:ITGB3 interacts with IGF2. ITGAV:ITGB3 and ITGAV:ITGB6 interact with FBN1. ITGAV:ITGB3 interacts with CD9, CD81 and CD151 (via second extracellular domain). ITGAV:ITGB6 interacts with TGFB1. ITGAV:ITGB3 interacts with PTN. Forms a complex with PTPRZ1 and PTN that stimulates endothelial cell migration through ITGB3 'Tyr-773' phosphorylation. Interacts with TM4SF19. In terms of assembly, (Microbial infection) Alpha-V/beta-6 and alpha-V/beta-3 bind to foot-and-mouth disease virus (FMDV) VP1 protein and acts as a receptor for this virus.

The protein resides in the cell membrane. It localises to the cell junction. Its subcellular location is the focal adhesion. In terms of biological role, the alpha-V (ITGAV) integrins are receptors for vitronectin, cytotactin, fibronectin, fibrinogen, laminin, matrix metalloproteinase-2, osteopontin, osteomodulin, prothrombin, thrombospondin, TGFB1 and vWF. They recognize the sequence R-G-D in a wide array of ligands. Alpha-V integrins may play a role in embryo implantation, angiogenesis and wound healing. ITGAV:ITGB3 binds to fractalkine (CX3CL1) and may act as its coreceptor in CX3CR1-dependent fractalkine signaling. ITGAV:ITGB3 binds to NRG1 (via EGF domain) and this binding is essential for NRG1-ERBB signaling. ITGAV:ITGB3 binds to FGF1 and this binding is essential for FGF1 signaling. ITGAV:ITGB3 binds to FGF2 and this binding is essential for FGF2 signaling. ITGAV:ITGB3 binds to IGF1 and this binding is essential for IGF1 signaling. ITGAV:ITGB3 binds to IGF2 and this binding is essential for IGF2 signaling. ITGAV:ITGB3 binds to IL1B and this binding is essential for IL1B signaling. ITGAV:ITGB3 binds to PLA2G2A via a site (site 2) which is distinct from the classical ligand-binding site (site 1) and this induces integrin conformational changes and enhanced ligand binding to site 1. ITGAV:ITGB3 and ITGAV:ITGB6 act as receptors for fibrillin-1 (FBN1) and mediate R-G-D-dependent cell adhesion to FBN1. Integrin alpha-V/beta-6 or alpha-V/beta-8 (ITGAV:ITGB6 or ITGAV:ITGB8) mediates R-G-D-dependent release of transforming growth factor beta-1 (TGF-beta-1) from regulatory Latency-associated peptide (LAP), thereby playing a key role in TGF-beta-1 activation. ITGAV:ITGB3 acts as a receptor for CD40LG. ITGAV:ITGB3 acts as a receptor for IBSP and promotes cell adhesion and migration to IBSP. This chain is Integrin alpha-V (ITGAV), found in Bos taurus (Bovine).